A 495-amino-acid polypeptide reads, in one-letter code: Ribose import ATP-binding protein RbsA 3 (495 aa).

ABC transporter domains lie at 5-240 (VRLR…VGRE) and 250-492 (AEIG…TGVK). 37-44 (GENGAGKS) is a binding site for ATP.

Belongs to the ABC transporter superfamily. Ribose importer (TC 3.A.1.2.1) family. In terms of assembly, the complex is composed of an ATP-binding protein (RbsA), two transmembrane proteins (RbsC) and a solute-binding protein (RbsB).

The protein localises to the cell membrane. The catalysed reaction is D-ribose(out) + ATP + H2O = D-ribose(in) + ADP + phosphate + H(+). Functionally, part of the ABC transporter complex RbsABC involved in ribose import. Responsible for energy coupling to the transport system. The protein is Ribose import ATP-binding protein RbsA 3 of Rubrobacter xylanophilus (strain DSM 9941 / JCM 11954 / NBRC 16129 / PRD-1).